Reading from the N-terminus, the 210-residue chain is MPPYTIVYFPVRGRCEAMRLLLADQGQSWKEEVVTGDSWVKGSLKSTCLYGQLPKFEDGDLILYQSNAILRHLGRSLGLYGKDQKEAALVDMANDGVEDLRCKYVTLIYTKYEEGKDDYVKALPGHLKPFETLLSQNQGGKAFIVGDQISFADYNLLDLLLIHQVLAPGCLDNFPLLSAYVARLSARPKIKAFLSSPDHVNRPINGNGKQ.

The GST N-terminal domain maps to 2-81 (PPYTIVYFPV…HLGRSLGLYG (80 aa)). Tyr4 is modified (phosphotyrosine; by EGFR). Residues Tyr8, Arg14, Trp39, Lys45, 52 to 53 (QL), and 65 to 66 (QS) each bind glutathione. One can recognise a GST C-terminal domain in the interval 83-204 (DQKEAALVDM…SSPDHVNRPI (122 aa)). N6-succinyllysine occurs at positions 103 and 116. An N6-acetyllysine modification is found at Lys128.

Belongs to the GST superfamily. Pi family. Homodimer. Interacts with CDK5.

It localises to the cytoplasm. The protein resides in the mitochondrion. Its subcellular location is the nucleus. The enzyme catalyses RX + glutathione = an S-substituted glutathione + a halide anion + H(+). It carries out the reaction prostaglandin J2 + glutathione = prostaglandin J2-S-(R)-glutathione. It catalyses the reaction prostaglandin J2 + glutathione = prostaglandin J2-S-(S)-glutathione. The catalysed reaction is prostaglandin A2 + glutathione = prostaglandin A2-S-(S)-glutathione. The enzyme catalyses 11(S)-hydroxy-14(S),15(S)-epoxy-(5Z,8Z,12E)-eicosatrienoate + glutathione = (11S,15S)-dihydroxy-14(R)-S-glutathionyl-(5Z,8Z,12E)-eicosatrienoate. In terms of biological role, conjugation of reduced glutathione to a wide number of exogenous and endogenous hydrophobic electrophiles. Involved in the formation of glutathione conjugates of both prostaglandin A2 (PGA2) and prostaglandin J2 (PGJ2). Participates in the formation of novel hepoxilin regioisomers. Negatively regulates CDK5 activity via p25/p35 translocation to prevent neurodegeneration. This chain is Glutathione S-transferase P (GSTP1), found in Mesocricetus auratus (Golden hamster).